A 1722-amino-acid polypeptide reads, in one-letter code: Signal-induced proliferation-associated 1-like protein 2 (1722 aa).

Over residues 1-12 (MSDPRQSQEEKH) the composition is skewed to basic and acidic residues. Disordered regions lie at residues 1 to 29 (MSDPRQSQEEKHKLGRASSKFKDPPRIMQ) and 42 to 72 (NGNMGPTTSLNASNSNETGGGGPANGTPAVP). The segment covering 45-56 (MGPTTSLNASNS) has biased composition (polar residues). Position 148 is a phosphoserine (Ser148). Over residues 360–377 (GASAASQTQMPTGQTGNC) the composition is skewed to polar residues. The segment at 360–401 (GASAASQTQMPTGQTGNCESPLGSKEDLNSKENLDADEGDGK) is disordered. Ser379 and Ser383 each carry phosphoserine. Positions 383 to 401 (SKEDLNSKENLDADEGDGK) are enriched in basic and acidic residues. Positions 595-812 (LLKLDEQGLS…RTRQEYLKDL (218 aa)) constitute a Rap-GAP domain. Residues 950 to 1026 (EMTLRRNGLG…VKVVIIQPHD (77 aa)) enclose the PDZ domain. Residue Ser1029 is modified to Phosphoserine. 2 disordered regions span residues 1067–1245 (HRVP…FGSG) and 1330–1360 (EGSMGDLSEISSHSSGSHHSGSPSAHCSKSS). 2 stretches are compositionally biased toward low complexity: residues 1093 to 1102 (QQLLQQAQAA) and 1119 to 1130 (SSPSNQSSSSDP). Composition is skewed to basic and acidic residues over residues 1164–1183 (DGAREREDTMEASRHPETKW) and 1194–1217 (YKERALQKDGSCKDSPNKLSHIGD). Residues 1219 to 1236 (SCSSHSSSNTLSSNTSSN) are compositionally biased toward low complexity. Ser1244 carries the post-translational modification Phosphoserine. The segment covering 1337 to 1360 (SEISSHSSGSHHSGSPSAHCSKSS) has biased composition (low complexity). Phosphoserine is present on residues Ser1461, Ser1472, Ser1478, Ser1488, Ser1549, Ser1552, and Ser1591. A coiled-coil region spans residues 1654 to 1712 (LTGKVNQLELILRQLQTDLRKEKQDKAVLQAEVQHLRQDNMRLQEESQTATAQLRKFTE).

The sequence is that of Signal-induced proliferation-associated 1-like protein 2 (SIPA1L2) from Homo sapiens (Human).